Reading from the N-terminus, the 434-residue chain is A-adding tRNA nucleotidyltransferase (434 aa).

20–23 (GAVR) is an ATP binding site. Residues D33 and D35 each contribute to the Mg(2+) site. Residues 91–92 (RD), N96, 132–141 (DPLRAWRAAR), and R177 each bind ATP. Residues 227–339 (VFEHGVEALH…ELLPDLLSLM (113 aa)) form the HD domain.

It belongs to the tRNA nucleotidyltransferase/poly(A) polymerase family. The cofactor is Mg(2+).

It carries out the reaction a tRNA with a 3' CC end + ATP = a tRNA with a 3' CCA end + diphosphate. Its function is as follows. tRNA nucleotidyltransferase involved in the synthesis of the tRNA CCA terminus. Adds the terminal adenosine residue to tRNA. This Deinococcus radiodurans (strain ATCC 13939 / DSM 20539 / JCM 16871 / CCUG 27074 / LMG 4051 / NBRC 15346 / NCIMB 9279 / VKM B-1422 / R1) protein is A-adding tRNA nucleotidyltransferase.